The chain runs to 306 residues: tRNA dimethylallyltransferase (306 aa).

12–19 (GPTAAGKT) lines the ATP pocket. 14-19 (TAAGKT) serves as a coordination point for substrate. 3 interaction with substrate tRNA regions span residues 37–40 (DSAL), 161–165 (QRINR), and 242–247 (RCVGYR).

It belongs to the IPP transferase family. As to quaternary structure, monomer. Mg(2+) is required as a cofactor.

The enzyme catalyses adenosine(37) in tRNA + dimethylallyl diphosphate = N(6)-dimethylallyladenosine(37) in tRNA + diphosphate. Its function is as follows. Catalyzes the transfer of a dimethylallyl group onto the adenine at position 37 in tRNAs that read codons beginning with uridine, leading to the formation of N6-(dimethylallyl)adenosine (i(6)A). The protein is tRNA dimethylallyltransferase of Pseudoalteromonas translucida (strain TAC 125).